A 309-amino-acid polypeptide reads, in one-letter code: Taste receptor type 2 member 45 (309 aa).

M1 is a topological domain (extracellular). The chain crosses the membrane as a helical span at residues 2–22 (ITFLPIIFSILVVVTFVIGNF). Over 23–55 (ANGFIALVNSTEWVKRQKISFADQIVTALAVSR) the chain is Cytoplasmic. Residues 56–76 (VGLLWVLLLNWYSTVLNPAFY) traverse the membrane as a helical segment. Over 77 to 98 (SVELRTTAYNIWAVTGHFSNWL) the chain is Extracellular. A helical membrane pass occupies residues 99–119 (ATSLSIFYLLKIANFSNLIFL). The Cytoplasmic segment spans residues 120 to 126 (HLKRRVK). Residues 127-147 (SVILVMLLGPLLFLACHLFVV) traverse the membrane as a helical segment. Over 148-178 (NMNQIVWTKEYEGNMTWKIKLRRAMYLSDTT) the chain is Extracellular. N161 is a glycosylation site (N-linked (GlcNAc...) asparagine). The chain crosses the membrane as a helical span at residues 179-199 (VTMLANLVPFTVTLISFLLLV). Residues 200-229 (CSLCEHLKKMQLHGKGSQDPSTKVHIKALQ) lie on the Cytoplasmic side of the membrane. A helical transmembrane segment spans residues 230–250 (TVISFLLLCAIYFVSVIISVW). Topologically, residues 251–259 (SFKNLENKP) are extracellular. A helical transmembrane segment spans residues 260–280 (VFMFCQAIGFSCSSAHPFILI). Topologically, residues 281–309 (WGNKKLKQPFLSVLWQMRYWVKGEKPSSS) are cytoplasmic.

Belongs to the G-protein coupled receptor T2R family.

It localises to the membrane. Its function is as follows. Receptor that may play a role in the perception of bitterness and is gustducin-linked. May play a role in sensing the chemical composition of the gastrointestinal content. The activity of this receptor may stimulate alpha gustducin, mediate PLC-beta-2 activation and lead to the gating of TRPM5. The polypeptide is Taste receptor type 2 member 45 (TAS2R45) (Pan paniscus (Pygmy chimpanzee)).